We begin with the raw amino-acid sequence, 185 residues long: NAD(P)H-dependent FAD/FMN reductase GTNG_3158 (185 aa).

As to quaternary structure, anthranilate 3-monooxygenase consists of a reductase component (GTNG_3158) and an oxygenase component HpaH.

It catalyses the reaction FADH2 + NAD(+) = FAD + NADH + 2 H(+). It carries out the reaction FADH2 + NADP(+) = FAD + NADPH + 2 H(+). In terms of biological role, involved in the pathway of tryptophan degradation. Reduces FAD/FMN to FADH(2)/FMNH(2), which are subsequently used for the hydroxylation of anthranilate. It can reduce either FAD or flavin mononucleotide (FMN) but prefers FAD. The enzyme has a slight preference for NADPH as acceptor. The chain is NAD(P)H-dependent FAD/FMN reductase GTNG_3158 from Geobacillus thermodenitrificans (strain NG80-2).